A 68-amino-acid polypeptide reads, in one-letter code: Antimicrobial peptide Eval655 (68 aa).

The N-terminal stretch at 1-23 (MKTQFVVLLVALVLLQMFAQSEA) is a signal peptide. Position 36 is a leucine amide (Leu-36). The propeptide occupies 37-68 (GKRGLKNLDDFDDIFDDDLSSADLEFLKQLMR).

This sequence belongs to the non-disulfide-bridged peptide (NDBP) superfamily. Short antimicrobial peptide (group 4) family. As to expression, expressed by the venom gland.

The protein localises to the secreted. In terms of biological role, probable antimicrobial peptide. Shows low inhibitory activity against herpes simplex virus type 1 (HSV-1). The polypeptide is Antimicrobial peptide Eval655 (Euscorpiops validus (Scorpion)).